Reading from the N-terminus, the 141-residue chain is uncharacterized protein (141 aa).

This is an uncharacterized protein from Methanocaldococcus jannaschii (strain ATCC 43067 / DSM 2661 / JAL-1 / JCM 10045 / NBRC 100440) (Methanococcus jannaschii).